A 331-amino-acid polypeptide reads, in one-letter code: N-arachidonyl glycine receptor (331 aa).

The Extracellular segment spans residues 1–26; that stretch reads MATLSNHNQLDLSNGSHPEEYKIAAL. Asn-14 carries N-linked (GlcNAc...) asparagine glycosylation. A helical membrane pass occupies residues 27–47; the sequence is VFYSCIFLIGLFVNVTALWVF. At 48–56 the chain is on the cytoplasmic side; sequence SCTTKKRTT. A helical membrane pass occupies residues 57-77; that stretch reads VTIYMMNVALLDLVFILSLPF. Topologically, residues 78 to 95 are extracellular; the sequence is RMFYYAKGEWPFGEYFCH. A disulfide bridge connects residues Cys-94 and Cys-172. Residues 96-116 form a helical membrane-spanning segment; the sequence is ILGALVVFYPSLALWLLAFIS. Over 117 to 138 the chain is Cytoplasmic; the sequence is ADRYMAIVQPKYAKELKNTGKA. A helical transmembrane segment spans residues 139–159; it reads VLACGGVWVMTLTTTVPLLLL. Over 160–191 the chain is Extracellular; the sequence is YEDPDKASSPATCLKISDITHLKAVNVLNFTR. Asn-188 is a glycosylation site (N-linked (GlcNAc...) asparagine). The chain crosses the membrane as a helical span at residues 192–212; the sequence is LIFFFLIPLFIMIGCYVVIIH. At 213-236 the chain is on the cytoplasmic side; sequence SLLRGQTSKLKPKVKEKSIRIIMT. The helical transmembrane segment at 237 to 257 threads the bilayer; the sequence is LLLQVLVCFVPFHICFAVLML. Residues 258–268 lie on the Extracellular side of the membrane; that stretch reads QGQENSYSPWG. Residues 269 to 289 form a helical membrane-spanning segment; sequence AFTTFLMNLSTCLDVVLYYIV. Residues 290–331 lie on the Cytoplasmic side of the membrane; the sequence is SKQFQARVISVMLYRNYLRSVRRKSVRSGSLRSLSNMNSEML. Ser-322 bears the Phosphoserine mark.

The protein belongs to the G-protein coupled receptor 1 family. As to expression, expressed in the eye including cornea, retina, iris and ciliary epithelium (at protein level). Expressed in spleen, liver and lymphocytes with highest expression levels in intestinal intraepithelial lymphocytes.

Its subcellular location is the cell membrane. It is found in the cytoplasmic vesicle membrane. G protein-coupled receptor (GPCR) that plays a role in diverse physiological processes particularly within the immune and nervous systems. Becomes active when triggered by various endogenous ligands including endocannabinoid N-arachidonyl glycine (NAGly), delta-9-tetrahydrocannabinol or resolvin D2/RvD2 derived from the omega-3 fatty acid docosahexaenoic acid (DHA). Upon RvD2 binding, facilitates the resolution of inflammation, aiding in tissue repair and homeostasis. Mechanistically, RvD2 ligation initiates Galphas protein coupling, activation of cAMP-PKA signaling pathway and phosphorylation of STAT3, leading to RvD2-stimulated macrophage phagocytosis. Mediates NAGly-induced process of reorganization of actin filaments and induction of acrosomal exocytosis. Activation by N-arachidonoyl glycine (NAGly) can also induce apoptosis in macrophages. Plays a role in homeostasis of CD8+ subsets of intraepithelial lymphocytes (IELs) (CD8alphaalpha and CD8alphabeta IELs) in small intestine by supporting preferential migration of CD8alphaalpha T-cells to intraepithelial compartment over lamina propria compartment, and by mediating their reconstitution into small intestine after bone marrow transplant. Also participates in hypotensive responses, mediating reduction in intraocular and blood pressure. This is N-arachidonyl glycine receptor from Mus musculus (Mouse).